We begin with the raw amino-acid sequence, 248 residues long: Probable transcriptional regulatory protein RPA1097 (248 aa).

Residues 1 to 21 (MAGHSQFKNIMHRKGRQDAQR) form a disordered region.

Belongs to the TACO1 family.

It is found in the cytoplasm. The protein is Probable transcriptional regulatory protein RPA1097 of Rhodopseudomonas palustris (strain ATCC BAA-98 / CGA009).